Reading from the N-terminus, the 459-residue chain is Anthocyanidin 3-O-glucoside 2''-O-glucosyltransferase (459 aa).

The active-site Proton acceptor is the His-20. His-20 is an an anthocyanidin binding site. The active-site Charge relay is the Asp-117. Positions 138, 335, 337, 352, 355, 357, and 360 each coordinate UDP-alpha-D-glucose. Gly-375 is an an anthocyanidin binding site. Residues Asp-376 and Gln-377 each coordinate UDP-alpha-D-glucose.

This sequence belongs to the UDP-glycosyltransferase family. Mainly expressed in the petals and tubes of flower buds at around 24 hours before flower opening.

It catalyses the reaction an anthocyanidin 3-O-beta-D-glucoside + UDP-alpha-D-glucose = an anthocyanidin 3-O-sophoroside + UDP + 2 H(+). It functions in the pathway pigment biosynthesis; anthocyanin biosynthesis. Functionally, glycosyltransferase that mediates the glucosylation of anthocyanidin 3-O-glucosides to yield anthocyanidin 3-O-sophorosides. 3-O-sophoroside derivatives are required for the bright blue or red color of flowers. This is Anthocyanidin 3-O-glucoside 2''-O-glucosyltransferase (3GGT) from Ipomoea nil (Japanese morning glory).